The chain runs to 214 residues: MAGVLLTGFEPFDGETVNPSWEVVKQLDGTMIAGQPVIARQLPCVFGEALSVLYAAIEDLQPRLVIAVGQAGGRVDISVERVAINVDDARIPDNKGQQPVDTPIVDGGPAAWFSTLPIKAIVSALRDRGIPASVSQTAGTFVCNHVMYGLLHKLQEQAGVRGGFIHIPWLPAQAAAHPGEPSMATATVREALETAIAVALRQSVDSKLGGGATH.

Catalysis depends on residues Glu-80, Cys-143, and His-166.

The protein belongs to the peptidase C15 family. As to quaternary structure, homotetramer.

It is found in the cytoplasm. It catalyses the reaction Release of an N-terminal pyroglutamyl group from a polypeptide, the second amino acid generally not being Pro.. Removes 5-oxoproline from various penultimate amino acid residues except L-proline. This is Pyrrolidone-carboxylate peptidase from Klebsiella pneumoniae (strain 342).